Consider the following 565-residue polypeptide: MSANAGGSGSVDCGGSSSSSQTSCGPESSGSELTPATPAPRLLQGLLGSDDEEQEDPKDYCKGGYYPVKIGDLFNGRYHVVRKLGWGHFSTVWLCWDIQRKRFVALKVVKSAGHYTETAVDEIKLLKCVRDSDPSDPKRETIVQLIDDFRISGVNGVHVCMVLEVLGHQLLKWIIKSNYQGLPVPCVKSIVRQVLHGLDYLHTKCKIIHTDIKPENILLCVGDAYIRRLAAEATEWQQSGAQPPSRSTVSTAPQEVLIGKLSKNKRKKMRRKRKQQKRLLEERLRDLQRLEAMEAAVQAEDSSSRLERGSGSTSSSGCHPEGTRAGPSPASSSPVPGGERSLSPSSQTSGFSGSLFSTASCSILSGSSNQRETGGLLSPSTPFGASNLLVNPLEPQNADKIKIKIADLGNACWVHKHFTEDIQTRQYRAVEVLIGAEYGPPADIWSTACMAFELATGDYLFEPHSGEDYSRDEDHIAHIVELLGDIPPAFALSGRYSREFFNRRGELRHIPNLKHWGLYEVLMEKYEWPLEQATQFSAFLLPMMEYIPEKRASAADCLQHPWLNP.

Positions 1 to 44 are disordered; sequence MSANAGGSGSVDCGGSSSSSQTSCGPESSGSELTPATPAPRLLQ. Low complexity predominate over residues 10–31; it reads SVDCGGSSSSSQTSCGPESSGS. A Phosphoserine modification is found at Ser-49. The region spanning 78 to 563 is the Protein kinase domain; sequence YHVVRKLGWG…AADCLQHPWL (486 aa). ATP contacts are provided by residues 84–92 and Lys-107; that span reads LGWGHFSTV. The active-site Proton acceptor is the Asp-211. A compositionally biased stretch (polar residues) spans 236-253; it reads WQQSGAQPPSRSTVSTAP. 2 disordered regions span residues 236 to 280 and 295 to 350; these read WQQS…KRLL and AAVQ…QTSG. Residues 262–277 show a composition bias toward basic residues; that stretch reads SKNKRKKMRRKRKQQK. Residues 325–350 show a composition bias toward low complexity; the sequence is AGPSPASSSPVPGGERSLSPSSQTSG. The residue at position 328 (Ser-328) is a Phosphoserine.

It belongs to the protein kinase superfamily. CMGC Ser/Thr protein kinase family. Exclusively expressed in skeletal and heart muscle.

Its subcellular location is the nucleus. It localises to the cytoplasm. The enzyme catalyses L-seryl-[protein] + ATP = O-phospho-L-seryl-[protein] + ADP + H(+). It catalyses the reaction L-threonyl-[protein] + ATP = O-phospho-L-threonyl-[protein] + ADP + H(+). In terms of biological role, serine/arginine-rich protein-specific kinase which specifically phosphorylates its substrates at serine residues located in regions rich in arginine/serine dipeptides, known as RS domains. Phosphorylates the SR splicing factor SRSF1 and the lamin-B receptor (LBR) in vitro. Required for normal muscle development. This is SRSF protein kinase 3 (Srpk3) from Mus musculus (Mouse).